The chain runs to 1083 residues: Carbamoyl phosphate synthase large chain (1083 aa).

The interval 1 to 402 is carboxyphosphate synthetic domain; sequence MPKRTDIRKV…AYMKALRSME (402 aa). The ATP site is built by R129, R169, G175, G176, E208, V210, E215, G241, V242, H243, Q285, and E299. The 196-residue stretch at 133–328 folds into the ATP-grasp 1 domain; the sequence is KAAMQKIGVA…IAKIAAKLAL (196 aa). The Mg(2+) site is built by Q285, E299, and N301. Residues Q285, E299, and N301 each contribute to the Mn(2+) site. The tract at residues 403-554 is oligomerization domain; the sequence is LGRVGLESPE…YSTYEEEDEA (152 aa). Residues 555–937 are carbamoyl phosphate synthetic domain; that stretch reads PPTDRQKVLI…AFAKSQLAAG (383 aa). The 193-residue stretch at 679–871 folds into the ATP-grasp 2 domain; it reads AALIEKLGLK…MAKIAALCMV (193 aa). ATP is bound by residues R715, R754, L756, E761, G787, V788, H789, S790, Q830, and E842. Q830, E842, and N844 together coordinate Mg(2+). Mn(2+) is bound by residues Q830, E842, and N844. The MGS-like domain occupies 938–1078; the sequence is VKLPKSGKVF…QEYLGINAAP (141 aa). Residues 938 to 1083 form an allosteric domain region; the sequence is VKLPKSGKVF…INAAPPGTRR (146 aa).

Belongs to the CarB family. In terms of assembly, composed of two chains; the small (or glutamine) chain promotes the hydrolysis of glutamine to ammonia, which is used by the large (or ammonia) chain to synthesize carbamoyl phosphate. Tetramer of heterodimers (alpha,beta)4. The cofactor is Mg(2+). Mn(2+) serves as cofactor.

It carries out the reaction hydrogencarbonate + L-glutamine + 2 ATP + H2O = carbamoyl phosphate + L-glutamate + 2 ADP + phosphate + 2 H(+). It catalyses the reaction hydrogencarbonate + NH4(+) + 2 ATP = carbamoyl phosphate + 2 ADP + phosphate + 2 H(+). It participates in amino-acid biosynthesis; L-arginine biosynthesis; carbamoyl phosphate from bicarbonate: step 1/1. It functions in the pathway pyrimidine metabolism; UMP biosynthesis via de novo pathway; (S)-dihydroorotate from bicarbonate: step 1/3. Its function is as follows. Large subunit of the glutamine-dependent carbamoyl phosphate synthetase (CPSase). CPSase catalyzes the formation of carbamoyl phosphate from the ammonia moiety of glutamine, carbonate, and phosphate donated by ATP, constituting the first step of 2 biosynthetic pathways, one leading to arginine and/or urea and the other to pyrimidine nucleotides. The large subunit (synthetase) binds the substrates ammonia (free or transferred from glutamine from the small subunit), hydrogencarbonate and ATP and carries out an ATP-coupled ligase reaction, activating hydrogencarbonate by forming carboxy phosphate which reacts with ammonia to form carbamoyl phosphate. This Myxococcus xanthus (strain DK1622) protein is Carbamoyl phosphate synthase large chain.